The chain runs to 226 residues: Probable septum site-determining protein MinC (226 aa).

It belongs to the MinC family. As to quaternary structure, interacts with MinD and FtsZ.

In terms of biological role, cell division inhibitor that blocks the formation of polar Z ring septums. Rapidly oscillates between the poles of the cell to destabilize FtsZ filaments that have formed before they mature into polar Z rings. Prevents FtsZ polymerization. This Edwardsiella ictaluri (strain 93-146) protein is Probable septum site-determining protein MinC.